The following is a 131-amino-acid chain: MKKIVAAIVVIGLVFIAFFYLYSRSGDVYQSVDADLITLSSSGQEDIEIEKRQHVKDMLDIMNQGKQVKTEKTSAPDYEGTIKFHKDRYDSFRLWIDGSQQAVFLKDGTYYKLSKNDTKALLNIIKKEAKD.

The signal sequence occupies residues 1–26 (MKKIVAAIVVIGLVFIAFFYLYSRSG).

This is an uncharacterized protein from Bacillus subtilis (strain 168).